The primary structure comprises 202 residues: Outer-membrane lipoprotein carrier protein (202 aa).

Positions 1–21 (MKRLLVACCFLSGLISASALA) are cleaved as a signal peptide.

The protein belongs to the LolA family. Monomer.

It localises to the periplasm. In terms of biological role, participates in the translocation of lipoproteins from the inner membrane to the outer membrane. Only forms a complex with a lipoprotein if the residue after the N-terminal Cys is not an aspartate (The Asp acts as a targeting signal to indicate that the lipoprotein should stay in the inner membrane). In Yersinia pestis bv. Antiqua (strain Antiqua), this protein is Outer-membrane lipoprotein carrier protein.